An 856-amino-acid chain; its full sequence is V-type proton ATPase subunit a (856 aa).

Residues 1–409 (MAPKQDTPFR…NAYGTATYQE (409 aa)) are Cytoplasmic-facing. Residues 410 to 428 (VNPAIPVIVTFPFLFAVMF) form a helical membrane-spanning segment. Residues 429 to 430 (GD) lie on the Vacuolar side of the membrane. The helical transmembrane segment at 431-447 (FGHALIMLCAALAMIYW) threads the bilayer. Over 448-460 (EKPLKKVTFELFA) the chain is Cytoplasmic. The chain crosses the membrane as a helical span at residues 461–490 (MVFYGRYIVLVMAVFSVYTGLIYNDVFSKS). Residues 491–544 (MTLFDSQWKWVVPENFKEGMTVKAVLREPNGYRYPFGLDWRWHGTENELLFINS) lie on the Vacuolar side of the membrane. Residues 545 to 564 (YKMKMAIILGWAHMTYSLCF) traverse the membrane as a helical segment. The Cytoplasmic segment spans residues 565-582 (SYINARHFKRPIDIWGNF). A helical transmembrane segment spans residues 583–603 (VPGMIFFQSIFGYLVLCIIYK). Residues 604 to 648 (WSVDWFGTGRQPPGLLNMLIYMFLQPGTLDGGVELYPGQATVQVI) lie on the Vacuolar side of the membrane. Residues 649 to 668 (LLLLAVIQVPILLFLKPFYL) form a helical membrane-spanning segment. Residues 669-738 (RWENNRARAK…EVMIHQVIHT (70 aa)) lie on the Cytoplasmic side of the membrane. The tract at residues 689 to 710 (VSALDEDDEEDPSNGDDYEGAA) is disordered. Over residues 692 to 707 (LDEDDEEDPSNGDDYE) the composition is skewed to acidic residues. The helical transmembrane segment at 739 to 763 (IEFCLNSVSHTASYLRLWALSLAHQ) threads the bilayer. Residues 764 to 784 (QLSAVLWSMTMAKALESKGLG) are Vacuolar-facing. Residues 785 to 823 (GAIFLVVAFAMFFVLSVIILIIMEGVSAMLHSLRLAWVE) form a helical membrane-spanning segment. Residues 824-856 (SFSKFAEFGGWPFTPFSFKQQLEESEELKEYIG) lie on the Cytoplasmic side of the membrane.

The protein belongs to the V-ATPase 116 kDa subunit family. In terms of assembly, V-ATPase is a heteromultimeric enzyme composed of a peripheral catalytic V1 complex (components A to H) attached to an integral membrane V0 proton pore complex (components: a, c, c', c'', d, e, f and VOA1).

It is found in the vacuole membrane. Its function is as follows. Subunit of the V0 complex of vacuolar(H+)-ATPase (V-ATPase), a multisubunit enzyme composed of a peripheral complex (V1) that hydrolyzes ATP and a membrane integral complex (V0) that translocates protons. V-ATPase is responsible for acidifying and maintaining the pH of intracellular compartments. The polypeptide is V-type proton ATPase subunit a (vph-1) (Neurospora crassa (strain ATCC 24698 / 74-OR23-1A / CBS 708.71 / DSM 1257 / FGSC 987)).